An 84-amino-acid chain; its full sequence is MSEKIRTMQGRVISDKMDKSIVVAIERMVKHPIYGKYIKRTTKLHAHDENNECGLGDTVEIRECRPLSKTKSWTLVNIVEKAKA.

Belongs to the universal ribosomal protein uS17 family. Part of the 30S ribosomal subunit.

One of the primary rRNA binding proteins, it binds specifically to the 5'-end of 16S ribosomal RNA. This Aliivibrio fischeri (strain ATCC 700601 / ES114) (Vibrio fischeri) protein is Small ribosomal subunit protein uS17.